Reading from the N-terminus, the 33-residue chain is Brevinin-2HSa (33 aa).

A disulfide bond links Cys-27 and Cys-33.

In terms of tissue distribution, expressed by the skin glands.

It localises to the secreted. In terms of biological role, has antibacterial activity against the Gram-positive bacterium S.aureus ATCC 25923 (MIC=18 uM) and the Gram-negative bacterium E.coli ATCC 25726 (MIC=36 uM). This chain is Brevinin-2HSa, found in Odorrana hosii (Hose's rock frog).